The chain runs to 83 residues: Beta-defensin 19 (83 aa).

The N-terminal stretch at 1–19 (MRLALLLLAILVATELVVS) is a signal peptide. 3 disulfide bridges follow: Cys27–Cys54, Cys34–Cys48, and Cys38–Cys55.

It belongs to the beta-defensin family. Specifically expressed in male gonads (Sertoli cells).

Its subcellular location is the secreted. Functionally, has antibacterial activity. The chain is Beta-defensin 19 (Defb19) from Mus musculus (Mouse).